The following is a 948-amino-acid chain: RNA polymerase-associated protein RapA (948 aa).

The Helicase ATP-binding domain maps to 164–332; it reads EVADRIAPRV…FARLRLLDPN (169 aa). 177-184 is a binding site for ATP; the sequence is DEVGLGKT. The DEAH box signature appears at 278–281; it reads DEAH. The Helicase C-terminal domain maps to 473–627; that stretch reads RVDWLIDTLK…TCPTGNALQH (155 aa).

The protein belongs to the SNF2/RAD54 helicase family. RapA subfamily. In terms of assembly, interacts with the RNAP. Has a higher affinity for the core RNAP than for the holoenzyme. Its ATPase activity is stimulated by binding to RNAP.

Transcription regulator that activates transcription by stimulating RNA polymerase (RNAP) recycling in case of stress conditions such as supercoiled DNA or high salt concentrations. Probably acts by releasing the RNAP, when it is trapped or immobilized on tightly supercoiled DNA. Does not activate transcription on linear DNA. Probably not involved in DNA repair. This Pseudomonas syringae pv. syringae (strain B728a) protein is RNA polymerase-associated protein RapA.